We begin with the raw amino-acid sequence, 362 residues long: Cobalt-precorrin-5B C(1)-methyltransferase (362 aa).

It belongs to the CbiD family.

The enzyme catalyses Co-precorrin-5B + S-adenosyl-L-methionine = Co-precorrin-6A + S-adenosyl-L-homocysteine. It participates in cofactor biosynthesis; adenosylcobalamin biosynthesis; cob(II)yrinate a,c-diamide from sirohydrochlorin (anaerobic route): step 6/10. Its function is as follows. Catalyzes the methylation of C-1 in cobalt-precorrin-5B to form cobalt-precorrin-6A. This Burkholderia cenocepacia (strain ATCC BAA-245 / DSM 16553 / LMG 16656 / NCTC 13227 / J2315 / CF5610) (Burkholderia cepacia (strain J2315)) protein is Cobalt-precorrin-5B C(1)-methyltransferase.